The chain runs to 208 residues: LexA repressor (208 aa).

A DNA-binding region (H-T-H motif) is located at residues 28-48 (VREIGEAVGLASSSTVHGHLA). Catalysis depends on for autocatalytic cleavage activity residues serine 130 and lysine 168.

It belongs to the peptidase S24 family. In terms of assembly, homodimer.

The catalysed reaction is Hydrolysis of Ala-|-Gly bond in repressor LexA.. Functionally, represses a number of genes involved in the response to DNA damage (SOS response), including recA and lexA. In the presence of single-stranded DNA, RecA interacts with LexA causing an autocatalytic cleavage which disrupts the DNA-binding part of LexA, leading to derepression of the SOS regulon and eventually DNA repair. This Shouchella clausii (strain KSM-K16) (Alkalihalobacillus clausii) protein is LexA repressor.